We begin with the raw amino-acid sequence, 139 residues long: Large ribosomal subunit protein uL16 (139 aa).

Residues 1–13 (MLQPARRKYRKEQ) are compositionally biased toward basic residues. The segment at 1-23 (MLQPARRKYRKEQKGRNTGISHS) is disordered.

It belongs to the universal ribosomal protein uL16 family. Part of the 50S ribosomal subunit.

Binds 23S rRNA and is also seen to make contacts with the A and possibly P site tRNAs. This is Large ribosomal subunit protein uL16 from Herminiimonas arsenicoxydans.